Here is a 154-residue protein sequence, read N- to C-terminus: 6,7-dimethyl-8-ribityllumazine synthase (154 aa).

5-amino-6-(D-ribitylamino)uracil is bound by residues Phe-26, 60–62 (ALE), and 84–86 (CII). 89 to 90 (ET) is a binding site for (2S)-2-hydroxy-3-oxobutyl phosphate. His-92 serves as the catalytic Proton donor. Asn-117 contributes to the 5-amino-6-(D-ribitylamino)uracil binding site. Residue Arg-131 coordinates (2S)-2-hydroxy-3-oxobutyl phosphate.

This sequence belongs to the DMRL synthase family.

It catalyses the reaction (2S)-2-hydroxy-3-oxobutyl phosphate + 5-amino-6-(D-ribitylamino)uracil = 6,7-dimethyl-8-(1-D-ribityl)lumazine + phosphate + 2 H2O + H(+). It functions in the pathway cofactor biosynthesis; riboflavin biosynthesis; riboflavin from 2-hydroxy-3-oxobutyl phosphate and 5-amino-6-(D-ribitylamino)uracil: step 1/2. Its function is as follows. Catalyzes the formation of 6,7-dimethyl-8-ribityllumazine by condensation of 5-amino-6-(D-ribitylamino)uracil with 3,4-dihydroxy-2-butanone 4-phosphate. This is the penultimate step in the biosynthesis of riboflavin. This is 6,7-dimethyl-8-ribityllumazine synthase from Acidovorax sp. (strain JS42).